Reading from the N-terminus, the 502-residue chain is Polyadenylate-binding protein, cytoplasmic and nuclear (502 aa).

4 RRM domains span residues 14-90, 96-176, 191-275, and 299-376; these read LTIY…KKDE, GNIF…LYNP, TNCF…KGQR, and KNLY…YFKN.

Belongs to the polyadenylate-binding protein type-1 family.

The protein resides in the cytoplasm. Its subcellular location is the nucleus. In terms of biological role, binds the poly(A) tail of mRNA. Appears to be an important mediator of the multiple roles of the poly(A) tail in mRNA biogenesis, stability and translation. This is Polyadenylate-binding protein, cytoplasmic and nuclear (PAB1) from Encephalitozoon cuniculi (strain GB-M1) (Microsporidian parasite).